A 146-amino-acid chain; its full sequence is Large ribosomal subunit protein uL15 (146 aa).

The disordered stretch occupies residues 1–64; it reads MELNSIKPAA…MPMHRRLPKR (64 aa). The span at 30-39 shows a compositional bias: basic residues; that stretch reads TATKGHKGQK.

It belongs to the universal ribosomal protein uL15 family. As to quaternary structure, part of the 50S ribosomal subunit.

Its function is as follows. Binds to the 23S rRNA. The protein is Large ribosomal subunit protein uL15 of Geotalea daltonii (strain DSM 22248 / JCM 15807 / FRC-32) (Geobacter daltonii).